A 605-amino-acid polypeptide reads, in one-letter code: Apoptosis-inducing factor 3 (605 aa).

The segment at 22 to 45 is disordered; the sequence is KERGKEELSASGKGSPRAYQGNGT. The Rieske domain maps to 70–165; that stretch reads AAVCHVKDLE…VKIEKEKVYV (96 aa). Positions 109, 111, 128, and 131 each coordinate [2Fe-2S] cluster. Residues 201–205, arginine 235, lysine 240, valine 270, aspartate 467, and tryptophan 514 each bind FAD; that span reads GAGAA.

This sequence belongs to the FAD-dependent oxidoreductase family. As to expression, ubiquitous. Expressed in bone marrow, cerebral cortex, liver, ovary, thymus, thyroid gland and tongue (at protein level).

The protein resides in the mitochondrion. Induces apoptosis through a caspase dependent pathway. Reduces mitochondrial membrane potential. This is Apoptosis-inducing factor 3 (AIFM3) from Homo sapiens (Human).